The chain runs to 191 residues: 3-isopropylmalate dehydratase small subunit (191 aa).

The protein belongs to the LeuD family. LeuD type 1 subfamily. As to quaternary structure, heterodimer of LeuC and LeuD.

The enzyme catalyses (2R,3S)-3-isopropylmalate = (2S)-2-isopropylmalate. Its pathway is amino-acid biosynthesis; L-leucine biosynthesis; L-leucine from 3-methyl-2-oxobutanoate: step 2/4. In terms of biological role, catalyzes the isomerization between 2-isopropylmalate and 3-isopropylmalate, via the formation of 2-isopropylmaleate. This chain is 3-isopropylmalate dehydratase small subunit, found in Anaeromyxobacter dehalogenans (strain 2CP-1 / ATCC BAA-258).